A 102-amino-acid polypeptide reads, in one-letter code: ATP-dependent Clp protease adapter protein ClpS (102 aa).

Belongs to the ClpS family. Binds to the N-terminal domain of the chaperone ClpA.

Functionally, involved in the modulation of the specificity of the ClpAP-mediated ATP-dependent protein degradation. The sequence is that of ATP-dependent Clp protease adapter protein ClpS from Desulfotalea psychrophila (strain LSv54 / DSM 12343).